We begin with the raw amino-acid sequence, 693 residues long: Sister chromatid cohesion 1 protein 3 (693 aa).

Disordered stretches follow at residues 167 to 250 (IPMD…PGTV), 262 to 361 (DLSP…KNFD), 460 to 511 (PVSP…TFDN), and 545 to 573 (TQSG…GQRN). Composition is skewed to basic and acidic residues over residues 178 to 201 (VSRH…EPRD) and 232 to 243 (TEERIPNSERND). Residues 264–277 (SPTSHPSFAAQQQD) show a composition bias toward polar residues. The segment covering 278–295 (VRVERTESLDETLNEKEP) has biased composition (basic and acidic residues). A compositionally biased stretch (low complexity) spans 316 to 325 (RSGSPGSAAG). 2 stretches are compositionally biased toward polar residues: residues 465 to 483 (PDST…QQTE) and 545 to 564 (TQSG…TSTV).

Belongs to the rad21 family. In terms of assembly, component of the cohesin complex. In terms of tissue distribution, low expression in shoots, buds, siliques, leaves and roots. Found in, but not limited to, actively dividing cells: in procambium, protoderm and ground meristem in roots, and in shoot and floral meristems.

The protein localises to the nucleus. In terms of biological role, may be involved in sister chromatid cohesion during mitosis. This Arabidopsis thaliana (Mouse-ear cress) protein is Sister chromatid cohesion 1 protein 3 (SYN3).